We begin with the raw amino-acid sequence, 174 residues long: CASP-like protein 4D2 (174 aa).

At 1 to 14 (MAPPPPSPPAVSLK) the chain is on the cytoplasmic side. Residues 15–35 (VLLLLLRVLTGVFLVIALIIL) form a helical membrane-spanning segment. The Extracellular portion of the chain corresponds to 36–60 (STNSVTIVSQGSALKFHFKDVYAYR). The chain crosses the membrane as a helical span at residues 61–81 (YMLSAAVIGLVYAVIQLFFTI). The Cytoplasmic portion of the chain corresponds to 82-97 (SEFATGVKNPFNYQLD). Residues 98-118 (FYGDKLISYLVATGSAAGFGV) form a helical membrane-spanning segment. Residues 119-150 (TKDLKDTFLALVALDSTDPVDKFFSKGYASAS) lie on the Extracellular side of the membrane. A helical transmembrane segment spans residues 151-171 (LLLFAFICLAVLSVFSSFAMA). Residues 172–174 (KRN) are Cytoplasmic-facing.

This sequence belongs to the Casparian strip membrane proteins (CASP) family. As to quaternary structure, homodimer and heterodimers.

Its subcellular location is the cell membrane. The sequence is that of CASP-like protein 4D2 from Arabidopsis thaliana (Mouse-ear cress).